Here is a 277-residue protein sequence, read N- to C-terminus: Large ribosomal subunit protein uL2 (277 aa).

Disordered regions lie at residues 1–58 and 223–277; these read MGIR…GGGH and GVVM…GKKR. Residues 23-33 show a composition bias toward basic and acidic residues; sequence EITRSEPEKSL. Basic residues predominate over residues 37–58; it reads LHGRGGRNAHGKITTRHKGGGH. Basic and acidic residues predominate over residues 251 to 267; that stretch reads GKPEGRTRRNKPSDKLI. Over residues 268–277 the composition is skewed to basic residues; the sequence is VRRRRTGKKR.

The protein belongs to the universal ribosomal protein uL2 family. Part of the 50S ribosomal subunit. Forms a bridge to the 30S subunit in the 70S ribosome.

One of the primary rRNA binding proteins. Required for association of the 30S and 50S subunits to form the 70S ribosome, for tRNA binding and peptide bond formation. It has been suggested to have peptidyltransferase activity; this is somewhat controversial. Makes several contacts with the 16S rRNA in the 70S ribosome. The polypeptide is Large ribosomal subunit protein uL2 (Saccharopolyspora erythraea (strain ATCC 11635 / DSM 40517 / JCM 4748 / NBRC 13426 / NCIMB 8594 / NRRL 2338)).